Here is a 289-residue protein sequence, read N- to C-terminus: 3-methyl-2-oxobutanoate hydroxymethyltransferase (289 aa).

Residues 1–15 are compositionally biased toward polar residues; the sequence is MSTTFQLDTSTSRAN. Residues 1-20 are disordered; that stretch reads MSTTFQLDTSTSRANPTPAP. Asp67 and Asp106 together coordinate Mg(2+). 3-methyl-2-oxobutanoate contacts are provided by residues 67–68, Asp106, and Lys136; that span reads DS. Glu138 lines the Mg(2+) pocket. The active-site Proton acceptor is Glu205.

Belongs to the PanB family. As to quaternary structure, homodecamer; pentamer of dimers. The cofactor is Mg(2+).

The protein resides in the cytoplasm. The catalysed reaction is 3-methyl-2-oxobutanoate + (6R)-5,10-methylene-5,6,7,8-tetrahydrofolate + H2O = 2-dehydropantoate + (6S)-5,6,7,8-tetrahydrofolate. It participates in cofactor biosynthesis; (R)-pantothenate biosynthesis; (R)-pantoate from 3-methyl-2-oxobutanoate: step 1/2. Catalyzes the reversible reaction in which hydroxymethyl group from 5,10-methylenetetrahydrofolate is transferred onto alpha-ketoisovalerate to form ketopantoate. The polypeptide is 3-methyl-2-oxobutanoate hydroxymethyltransferase (Novosphingobium aromaticivorans (strain ATCC 700278 / DSM 12444 / CCUG 56034 / CIP 105152 / NBRC 16084 / F199)).